Consider the following 414-residue polypeptide: 25-hydroxycholesterol 7-alpha-hydroxylase (414 aa).

Cysteine 354 is a binding site for heme.

Belongs to the cytochrome P450 family. Heme serves as cofactor. In terms of tissue distribution, highly expressed in brain; also expressed in liver and kidney.

Its subcellular location is the endoplasmic reticulum membrane. It is found in the microsome membrane. The enzyme catalyses 25-hydroxycholesterol + reduced [NADPH--hemoprotein reductase] + O2 = 7alpha,25-dihydroxycholesterol + oxidized [NADPH--hemoprotein reductase] + H2O + H(+). It catalyses the reaction (25R)-cholest-5-ene-3beta,26-diol + reduced [NADPH--hemoprotein reductase] + O2 = (25R)-cholest-5-en-3beta,7alpha,26-triol + oxidized [NADPH--hemoprotein reductase] + H2O + H(+). Its pathway is lipid metabolism; bile acid biosynthesis. Its function is as follows. Oxysterol 7alpha-hydroxylase that mediates formation of 7-alpha,25-dihydroxycholesterol (7-alpha,25-OHC) from 25-hydroxycholesterol. Plays a key role in cell positioning and movement in lymphoid tissues: 7-alpha,25-dihydroxycholesterol (7-alpha,25-OHC) acts as a ligand for the G protein-coupled receptor GPR183/EBI2, a chemotactic receptor for a number of lymphoid cells. The chain is 25-hydroxycholesterol 7-alpha-hydroxylase (Cyp7b1) from Rattus norvegicus (Rat).